Reading from the N-terminus, the 328-residue chain is Methionyl-tRNA formyltransferase (328 aa).

A (6S)-5,6,7,8-tetrahydrofolate-binding site is contributed by 110–113; sequence SLLP.

The protein belongs to the Fmt family.

The catalysed reaction is L-methionyl-tRNA(fMet) + (6R)-10-formyltetrahydrofolate = N-formyl-L-methionyl-tRNA(fMet) + (6S)-5,6,7,8-tetrahydrofolate + H(+). Functionally, attaches a formyl group to the free amino group of methionyl-tRNA(fMet). The formyl group appears to play a dual role in the initiator identity of N-formylmethionyl-tRNA by promoting its recognition by IF2 and preventing the misappropriation of this tRNA by the elongation apparatus. This chain is Methionyl-tRNA formyltransferase, found in Prochlorococcus marinus subsp. pastoris (strain CCMP1986 / NIES-2087 / MED4).